A 401-amino-acid polypeptide reads, in one-letter code: MKINFINLGCPKNLVDSENIMGFFKKENISSYHRADTVVINTCGFIEQAKRESIEEILKAIGDGKKVFVTGCLVYRYKEELQKEIPEAVFFENIKDLEGIELLQTPKRQLTTKHYAYLKIAEGCNRKCSFCAIPNIRGHHRSKSIEELVEEAIYLKEKGVKELIIVSQDTLYYQEDNSFKSIIKLLDALEKLDFPWIRLMYLYPNSISKDFIDYIDNSKSVLPYFDIPLQHISDNILKSMRRGYTKKDVFRLLEQINAMKHKKPILRSSFIVGYPTEEERDFEELLDFISQELFHFVGVFEYSHEEGTYAYQFDDKIPKEEKQRRYKEVFNLSQEILEEKNSALVGQEIDILIEKKDRARAFFQAPEIDGIVFLEKSSPKTGIIKKAKVIANIGTDLLVDI.

Residues 1–108 (MKINFINLGC…GIELLQTPKR (108 aa)) enclose the MTTase N-terminal domain. Cys-10, Cys-43, Cys-72, Cys-124, Cys-128, and Cys-131 together coordinate [4Fe-4S] cluster. Residues 110-339 (LTTKHYAYLK…FNLSQEILEE (230 aa)) form the Radical SAM core domain.

This sequence belongs to the methylthiotransferase family. RimO subfamily. Requires [4Fe-4S] cluster as cofactor.

Its subcellular location is the cytoplasm. The enzyme catalyses L-aspartate(89)-[ribosomal protein uS12]-hydrogen + (sulfur carrier)-SH + AH2 + 2 S-adenosyl-L-methionine = 3-methylsulfanyl-L-aspartate(89)-[ribosomal protein uS12]-hydrogen + (sulfur carrier)-H + 5'-deoxyadenosine + L-methionine + A + S-adenosyl-L-homocysteine + 2 H(+). Its function is as follows. Catalyzes the methylthiolation of an aspartic acid residue of ribosomal protein uS12. The sequence is that of Ribosomal protein uS12 methylthiotransferase RimO from Hydrogenobaculum sp. (strain Y04AAS1).